The following is a 144-amino-acid chain: 3-hydroxyacyl-[acyl-carrier-protein] dehydratase FabZ (144 aa).

His48 is a catalytic residue.

The protein belongs to the thioester dehydratase family. FabZ subfamily.

It is found in the cytoplasm. It carries out the reaction a (3R)-hydroxyacyl-[ACP] = a (2E)-enoyl-[ACP] + H2O. Functionally, involved in unsaturated fatty acids biosynthesis. Catalyzes the dehydration of short chain beta-hydroxyacyl-ACPs and long chain saturated and unsaturated beta-hydroxyacyl-ACPs. The protein is 3-hydroxyacyl-[acyl-carrier-protein] dehydratase FabZ of Bacillus licheniformis (strain ATCC 14580 / DSM 13 / JCM 2505 / CCUG 7422 / NBRC 12200 / NCIMB 9375 / NCTC 10341 / NRRL NRS-1264 / Gibson 46).